We begin with the raw amino-acid sequence, 478 residues long: Transposase for insertion sequence element IS231E (478 aa).

Belongs to the transposase 11 family.

In terms of biological role, involved in the transposition of the insertion sequence. The polypeptide is Transposase for insertion sequence element IS231E (Bacillus thuringiensis subsp. finitimus).